Consider the following 563-residue polypeptide: Serine/threonine-protein kinase WNK8 (563 aa).

A Protein kinase domain is found at 29 to 286 (IRYDDVLGRG…ALELSKDPFL (258 aa)). ATP is bound by residues 109–112 (TELF) and Lys-159. Asp-176 (proton acceptor) is an active-site residue. Residues 426 to 436 (TSSHHNQNSPR) show a composition bias toward polar residues. The segment at 426–459 (TSSHHNQNSPRLTHEDHEAANQQTVNSKDEEAAG) is disordered. Residue Ser-509 is modified to Phosphoserine.

The protein belongs to the protein kinase superfamily. Ser/Thr protein kinase family. WNK subfamily. As to quaternary structure, interacts with RGS1 and GB1, but not with GPA1. The association with RGS1 at the plasma membrane is triggered by induction of glucose. Binds to EDM2 in nucleus. In terms of processing, autophosphorylated.

Its subcellular location is the nucleus. It catalyses the reaction L-seryl-[protein] + ATP = O-phospho-L-seryl-[protein] + ADP + H(+). The catalysed reaction is L-threonyl-[protein] + ATP = O-phospho-L-threonyl-[protein] + ADP + H(+). Functionally, regulates flowering time by modulating the photoperiod pathway. Phosphorylates the vacuolar ATPase subunit C (VATC) and RGS1. Regulates EDM2 that, in turn, modulates development processes. This is Serine/threonine-protein kinase WNK8 (WNK8) from Arabidopsis thaliana (Mouse-ear cress).